A 232-amino-acid chain; its full sequence is Phospholipase A2 hemilipin (232 aa).

The signal sequence occupies residues 1–18 (MTFLILTILATVTPSLYS). Residues 19 to 105 (HVVQRELRVN…QRCSGSAEGR (87 aa)) constitute a propeptide that is removed on maturation. 3 residues coordinate Ca(2+): W115, G117, and G119. Intrachain disulfides connect C116–C137, C136–C175, C143–C168, C166–C206, and C211–C219. A glycan (N-linked (GlcNAc...) asparagine) is linked at N124. The active site involves H140. D141 provides a ligand contact to Ca(2+). The N-linked (GlcNAc...) asparagine glycan is linked to N157. A propeptide spanning residues 214 to 217 (KRDA) is cleaved from the precursor.

This sequence belongs to the phospholipase A2 family. Group III subfamily. As to quaternary structure, heterodimer composed of a small subunit and a large subunit; disulfid-linked. Ca(2+) serves as cofactor. Expressed by the venom gland.

It is found in the secreted. It catalyses the reaction a 1,2-diacyl-sn-glycero-3-phosphocholine + H2O = a 1-acyl-sn-glycero-3-phosphocholine + a fatty acid + H(+). Its function is as follows. Scorpion venom phospholipase A2 (PLA2) that shows high hydrolytic activities towards lecithin and acts as an effective blocker of all angiogenesis key steps in vivo and in vitro. It has no effect on apoptosis and does not display hemolytic, inflammatory or neurotoxic effects. PLA2 catalyzes the calcium-dependent hydrolysis of the 2-acyl groups in 3-sn-phosphoglycerides. This Hemiscorpius lepturus (Scorpion) protein is Phospholipase A2 hemilipin.